A 94-amino-acid chain; its full sequence is Co-chaperonin GroES (94 aa).

The protein belongs to the GroES chaperonin family. Heptamer of 7 subunits arranged in a ring. Interacts with the chaperonin GroEL.

The protein resides in the cytoplasm. Together with the chaperonin GroEL, plays an essential role in assisting protein folding. The GroEL-GroES system forms a nano-cage that allows encapsulation of the non-native substrate proteins and provides a physical environment optimized to promote and accelerate protein folding. GroES binds to the apical surface of the GroEL ring, thereby capping the opening of the GroEL channel. The polypeptide is Co-chaperonin GroES (Clostridium perfringens (strain ATCC 13124 / DSM 756 / JCM 1290 / NCIMB 6125 / NCTC 8237 / Type A)).